A 269-amino-acid polypeptide reads, in one-letter code: Formamidopyrimidine-DNA glycosylase (269 aa).

Residue Pro2 is the Schiff-base intermediate with DNA of the active site. Glu3 (proton donor) is an active-site residue. Residue Lys57 is the Proton donor; for beta-elimination activity of the active site. Residues His90, Arg109, and Lys150 each contribute to the DNA site. The FPG-type zinc finger occupies 235–269; the sequence is QVYGRKGEPCRVCGTPIVATKHAQRATFYCRHCQK. Arg259 functions as the Proton donor; for delta-elimination activity in the catalytic mechanism.

It belongs to the FPG family. Monomer. The cofactor is Zn(2+).

It carries out the reaction Hydrolysis of DNA containing ring-opened 7-methylguanine residues, releasing 2,6-diamino-4-hydroxy-5-(N-methyl)formamidopyrimidine.. It catalyses the reaction 2'-deoxyribonucleotide-(2'-deoxyribose 5'-phosphate)-2'-deoxyribonucleotide-DNA = a 3'-end 2'-deoxyribonucleotide-(2,3-dehydro-2,3-deoxyribose 5'-phosphate)-DNA + a 5'-end 5'-phospho-2'-deoxyribonucleoside-DNA + H(+). In terms of biological role, involved in base excision repair of DNA damaged by oxidation or by mutagenic agents. Acts as a DNA glycosylase that recognizes and removes damaged bases. Has a preference for oxidized purines, such as 7,8-dihydro-8-oxoguanine (8-oxoG). Has AP (apurinic/apyrimidinic) lyase activity and introduces nicks in the DNA strand. Cleaves the DNA backbone by beta-delta elimination to generate a single-strand break at the site of the removed base with both 3'- and 5'-phosphates. This Salmonella choleraesuis (strain SC-B67) protein is Formamidopyrimidine-DNA glycosylase.